A 214-amino-acid chain; its full sequence is Large ribosomal subunit protein bL25 (214 aa).

Positions 189–214 are disordered; the sequence is IHASRKAKADEDEAAEGEEGEEGAED. The segment covering 198–214 has biased composition (acidic residues); the sequence is DEDEAAEGEEGEEGAED.

This sequence belongs to the bacterial ribosomal protein bL25 family. CTC subfamily. In terms of assembly, part of the 50S ribosomal subunit; part of the 5S rRNA/L5/L18/L25 subcomplex. Contacts the 5S rRNA. Binds to the 5S rRNA independently of L5 and L18.

This is one of the proteins that binds to the 5S RNA in the ribosome where it forms part of the central protuberance. This chain is Large ribosomal subunit protein bL25, found in Alkalilimnicola ehrlichii (strain ATCC BAA-1101 / DSM 17681 / MLHE-1).